The primary structure comprises 325 residues: tRNA (guanine-N(7)-)-methyltransferase (325 aa).

The tract at residues 1-101 (MSEATDKQKQ…LEYPKSPESM (101 aa)) is disordered. Residues 51-69 (VSTTPEPEQSDSSATTATI) show a composition bias toward polar residues. Residues Gly122, 145–146 (EI), 199–200 (NA), and Cys219 contribute to the S-adenosyl-L-methionine site. Asp222 is an active-site residue. 297–299 (TEE) serves as a coordination point for S-adenosyl-L-methionine.

The protein belongs to the class I-like SAM-binding methyltransferase superfamily. TrmB family. As to quaternary structure, forms a complex with TRM82.

It localises to the nucleus. It carries out the reaction guanosine(46) in tRNA + S-adenosyl-L-methionine = N(7)-methylguanosine(46) in tRNA + S-adenosyl-L-homocysteine. It participates in tRNA modification; N(7)-methylguanine-tRNA biosynthesis. In terms of biological role, catalyzes the formation of N(7)-methylguanine at position 46 (m7G46) in tRNA. The sequence is that of tRNA (guanine-N(7)-)-methyltransferase from Candida albicans (strain SC5314 / ATCC MYA-2876) (Yeast).